The primary structure comprises 201 residues: Probable GTP-binding protein EngB (201 aa).

The EngB-type G domain maps to 22–197 (RLPEYAFIGR…LDYIDSINQE (176 aa)). Residues 30–37 (GRSNVGKS), 57–61 (GKTQL), 75–78 (DLPG), 142–145 (TKAD), and 173–178 (VFITSS) contribute to the GTP site. Mg(2+) is bound by residues Ser-37 and Thr-59.

Belongs to the TRAFAC class TrmE-Era-EngA-EngB-Septin-like GTPase superfamily. EngB GTPase family. Mg(2+) serves as cofactor.

Functionally, necessary for normal cell division and for the maintenance of normal septation. This chain is Probable GTP-binding protein EngB, found in Porphyromonas gingivalis (strain ATCC 33277 / DSM 20709 / CIP 103683 / JCM 12257 / NCTC 11834 / 2561).